A 246-amino-acid chain; its full sequence is Receptor-transporting protein 4 (246 aa).

The Cytoplasmic segment spans residues 1–224 (MVVDFWTWEQ…EKLGPSRDPD (224 aa)). Residues 48-159 (RAFGWFRCSS…DTANCEACTL (112 aa)) form a 3CxxC-type zinc finger. Residues 225 to 245 (PLNICVFILLLVFIVVKCFTS) traverse the membrane as a helical segment.

Belongs to the TMEM7 family. As to quaternary structure, interacts with TASR16. Interacts with OPRD1 and OPRM1; the interaction promotes cell surface localization of the OPDR1-OPRM1 heterodimer. (Microbial infection) Interacts with influenza A virus protein NS1; this interaction sequesters NS1 from interacting with RIG-I/DDX58 to restore antiviral signaling. In terms of tissue distribution, expressed in circumvallate papillae and testis.

The protein resides in the membrane. It localises to the cytoplasm. Functionally, chaperone protein that facilitates the trafficking and functional cell surface expression of some G-protein coupled receptors (GPCRs). Promotes functional expression of the bitter taste receptor TAS2R16. Also promotes functional expression of the opioid receptor heterodimer OPRD1-OPRM1. In addition, acts as a potent IFN-inducible suppressor of pathogens including lyssavirus rabies, influenza A or yellow fever virus. Mechanistically, associates with the viral replicase, binds viral RNA, and thereby suppresses viral genome amplification that replicates at the endoplasmic reticulum. In addition, restores antiviral signaling by interacting with and sequestering influenza A virus protein NS1. This is Receptor-transporting protein 4 (RTP4) from Homo sapiens (Human).